Here is an 88-residue protein sequence, read N- to C-terminus: MPANRYRSRSYKRVYKNTPGGENVLRYKKKKPSKHVCAECGKLLHGVPRGRPYEINKLAKSHKRPNRPYGGYLCSSCARKHFKNEARK.

Belongs to the eukaryotic ribosomal protein eL34 family.

The chain is Large ribosomal subunit protein eL34 from Methanobrevibacter smithii (strain ATCC 35061 / DSM 861 / OCM 144 / PS).